Reading from the N-terminus, the 1524-residue chain is MKKEVRKVRIALASPEKIRSWSYGEVEKPETINYRTLKPERDGLFDERIFGPIKDYECACGKYKRQRFEGKVCERCGVEVTRSIVRRYRMGHIELATPAAHIWFVKDVPSKIGTLLDLSATELEQVLYFNKYIVLDPKGAVLDGVPVEKRQLLTDEEYRELRYGKQETYPLPAGVDALVKDGEEVVKGQELAPGVVSRMDGVALYRFPRRVRVDYLRKERAALRIPLSAWVEKEAYRPGEVLAELSEPYLFRAEESGVVELKDLAEGHLIYLRQEEEVVARYFLPAGMTPLVVEGEIVEVGQPLAEGKGLLRLPRHMTAKEVEAEEEGDSVHLTLFLEWTEPKDYKVAPHMNVIVPEGAKVQAGEKIVAAIDPEEEVIAEAEGVVHLHEPASILVVKARVYPFEDDVEVTTGDRVAPGDVLADGGKVKSEIYGRVEVDLVRNVVRVVESYDIDARMGAEAIQELLKELDLEKLERELLEEMKHPSRARRAKARKRLEVVRAFLDSGNRPEWMILEAVPVLPPDLRPMVQVDGGRFATSDLNDLYRRLINRNNRLKKLLAQGAPEIIIRNEKRMLQEAVDAVIDNGRRGSPVTNPGSERPLRSLTDILSGKQGRFRQNLLGKRVDYSGRSVIVVGPQLKLHQCGLPKRMALELFKPFLLKKMEEKAFAPNVKAARRMLERQRDIKDEVWDALEEVIHGKVVLLNRAPTLHRLGIQAFQPVLVEGQSIQLHPLVCEAFNADFDGDQMAVHVPLSSFAQAEARIQMLSAHNLLSPASGEPLAKPSRDIILGLYYITQVRKEKKGAGMAFATPEEALAAYERGEVALNAPIVVAGRETSVGRLKFVFANPDEALLAVAHGLLDLQDVVTVRYLGRRLETSPGRILFARIVGEAVGDEKVAQELIQMDVPQEKNSLKDLVYQAFLRLGMEKTARLLDALKYYGFTLSTTSGITIGIDDAVIPEEKQRYLEEADRKLRQIEQAYEMGFLTDRERYDQVIQLWTETTEKVTQAVFKNFEENYPFNPLYVMAQSGARGNPQQIRQLCGMRGLMQKPSGETFEVPVRSSFREGLTVLEYFISSHGARKGGADTALRTADSGYLTRKLVDVAHEIVVREADCGTTNYISVPLFQMDEVTRTLRLRKRSDIESGLYGRVLAREVEALGRRLEEGRYLSLEDVHFLIKAAEAGEVREVPVRSPLTCQTRYGVCQKCYGYDLSMARPVSIGEAVGVVAAESIGEPGTQLTMRTFHTGGVAVGTDITQGLPRVIELFEARRPKAKAVISEIDGVVRIEEGEDRLSVFVESEGFSKEYKLPKDARLLVKDGDYVEAGQPLTRGAIDPHQLLEAKGPEAVERYLVDEIQKVYRAQGVKLHDKHIEIVVRQMLKYVEVTDPGDSRLLEGQVLEKWDVEALNERLIAEGKVPVAWKPLLMGVTKSALSTKSWLSAASFQNTTHVLTEAAIAGKKDELIGLKENVILGRLIPAGTGSDFVRFTQVVDQRTLKAIEEARKEAVEAKEKEAPRRPVRREQPGKGL.

Residues cysteine 58, cysteine 60, cysteine 73, and cysteine 76 each contribute to the Zn(2+) site. Positions 739, 741, and 743 each coordinate Mg(2+). The Zn(2+) site is built by cysteine 1112, cysteine 1194, cysteine 1201, and cysteine 1204. The tract at residues 1502-1524 (AVEAKEKEAPRRPVRREQPGKGL) is disordered.

This sequence belongs to the RNA polymerase beta' chain family. As to quaternary structure, the RNAP catalytic core consists of 2 alpha, 1 beta, 1 beta' and 1 omega subunit. When a sigma factor is associated with the core the holoenzyme is formed, which can initiate transcription. Mg(2+) serves as cofactor. The cofactor is Zn(2+).

It carries out the reaction RNA(n) + a ribonucleoside 5'-triphosphate = RNA(n+1) + diphosphate. DNA-dependent RNA polymerase catalyzes the transcription of DNA into RNA using the four ribonucleoside triphosphates as substrates. The protein is DNA-directed RNA polymerase subunit beta' of Thermus aquaticus.